A 226-amino-acid polypeptide reads, in one-letter code: Large ribosomal subunit protein uL1 (226 aa).

The protein belongs to the universal ribosomal protein uL1 family. As to quaternary structure, part of the 50S ribosomal subunit.

Its function is as follows. Binds directly to 23S rRNA. The L1 stalk is quite mobile in the ribosome, and is involved in E site tRNA release. Protein L1 is also a translational repressor protein, it controls the translation of the L11 operon by binding to its mRNA. The protein is Large ribosomal subunit protein uL1 of Mycoplasma genitalium (strain ATCC 33530 / DSM 19775 / NCTC 10195 / G37) (Mycoplasmoides genitalium).